The sequence spans 114 residues: Gamma-glutamylcyclotransferase family protein ytfP (114 aa).

It belongs to the gamma-glutamylcyclotransferase family.

The protein resides in the cytoplasm. May play a role in antibiotic biosynthesis. The protein is Gamma-glutamylcyclotransferase family protein ytfP (ytfP) of Citrobacter rodentium (strain ICC168) (Citrobacter freundii biotype 4280).